Consider the following 113-residue polypeptide: Ribonuclease P protein component (113 aa).

The protein belongs to the RnpA family. In terms of assembly, consists of a catalytic RNA component (M1 or rnpB) and a protein subunit.

The enzyme catalyses Endonucleolytic cleavage of RNA, removing 5'-extranucleotides from tRNA precursor.. Functionally, RNaseP catalyzes the removal of the 5'-leader sequence from pre-tRNA to produce the mature 5'-terminus. It can also cleave other RNA substrates such as 4.5S RNA. The protein component plays an auxiliary but essential role in vivo by binding to the 5'-leader sequence and broadening the substrate specificity of the ribozyme. This is Ribonuclease P protein component from Ligilactobacillus salivarius (strain UCC118) (Lactobacillus salivarius).